The chain runs to 135 residues: Large ribosomal subunit protein uL16c (135 aa).

Belongs to the universal ribosomal protein uL16 family. Part of the 50S ribosomal subunit.

The protein localises to the plastid. The protein resides in the chloroplast. The chain is Large ribosomal subunit protein uL16c from Eucalyptus globulus subsp. globulus (Tasmanian blue gum).